The following is a 533-amino-acid chain: Methyl-accepting chemotaxis protein IV (533 aa).

The Cytoplasmic portion of the chain corresponds to 1–6 (MFNRIR). A helical transmembrane segment spans residues 7–33 (ISTTLFLILILCGILQIGSNGMSFWAF). The Periplasmic portion of the chain corresponds to 34–188 (RDDLQRLNQV…AQSQRNYQIS (155 aa)). A helical membrane pass occupies residues 189-209 (ALVFISMIIVAAIYISSALWW). Residues 210-533 (TRKMIVQPLA…VQLQIAPVVS (324 aa)) are Cytoplasmic-facing. The region spanning 212 to 264 (KMIVQPLAIIGSHFDSIAAGNLARPIAVYGRNEITAIFASLKTMQQALRGTVS) is the HAMP domain. The region spanning 269–498 (GSQEMHIGIA…EAAVATEQLA (230 aa)) is the Methyl-accepting transducer domain. Q293, Q300, and Q307 each carry glutamate methyl ester (Gln). Position 489 is a glutamate methyl ester (Glu) (E489).

It belongs to the methyl-accepting chemotaxis (MCP) protein family.

Its subcellular location is the cell inner membrane. In terms of biological role, mediates taxis toward dipeptides via an interaction with the periplasmic dipeptide-binding protein. Chemotactic-signal transducers respond to changes in the concentration of attractants and repellents in the environment, transduce a signal from the outside to the inside of the cell, and facilitate sensory adaptation through the variation of the level of methylation. Attractants increase the level of methylation while repellents decrease the level of methylation, the methyl groups are added by the methyltransferase CheR and removed by the methylesterase CheB. This is Methyl-accepting chemotaxis protein IV (tap) from Escherichia coli (strain K12).